We begin with the raw amino-acid sequence, 243 residues long: 1-(5-phosphoribosyl)-5-[(5-phosphoribosylamino)methylideneamino] imidazole-4-carboxamide isomerase (243 aa).

The active-site Proton acceptor is Asp-14. Asp-135 serves as the catalytic Proton donor.

Belongs to the HisA/HisF family.

Its subcellular location is the cytoplasm. The catalysed reaction is 1-(5-phospho-beta-D-ribosyl)-5-[(5-phospho-beta-D-ribosylamino)methylideneamino]imidazole-4-carboxamide = 5-[(5-phospho-1-deoxy-D-ribulos-1-ylimino)methylamino]-1-(5-phospho-beta-D-ribosyl)imidazole-4-carboxamide. Its pathway is amino-acid biosynthesis; L-histidine biosynthesis; L-histidine from 5-phospho-alpha-D-ribose 1-diphosphate: step 4/9. In Rubrobacter xylanophilus (strain DSM 9941 / JCM 11954 / NBRC 16129 / PRD-1), this protein is 1-(5-phosphoribosyl)-5-[(5-phosphoribosylamino)methylideneamino] imidazole-4-carboxamide isomerase.